Consider the following 687-residue polypeptide: Translation initiation factor IF-2 (687 aa).

The 170-residue stretch at 186-355 folds into the tr-type G domain; the sequence is KRPPIVTVMG…LLTAEMLELK (170 aa). Residues 195–202 form a G1 region; the sequence is GHVDHGKT. Residue 195-202 participates in GTP binding; the sequence is GHVDHGKT. Residues 220–224 form a G2 region; it reads GITQH. Residues 241 to 244 form a G3 region; that stretch reads DTPG. Residues 241–245 and 295–298 contribute to the GTP site; these read DTPGH and NKID. Residues 295-298 form a G4 region; that stretch reads NKID. Positions 331-333 are G5; that stretch reads SAK.

It belongs to the TRAFAC class translation factor GTPase superfamily. Classic translation factor GTPase family. IF-2 subfamily.

The protein resides in the cytoplasm. One of the essential components for the initiation of protein synthesis. Protects formylmethionyl-tRNA from spontaneous hydrolysis and promotes its binding to the 30S ribosomal subunits. Also involved in the hydrolysis of GTP during the formation of the 70S ribosomal complex. In Clostridium botulinum (strain Alaska E43 / Type E3), this protein is Translation initiation factor IF-2.